The chain runs to 75 residues: Exodeoxyribonuclease 7 small subunit (75 aa).

Belongs to the XseB family. As to quaternary structure, heterooligomer composed of large and small subunits.

It localises to the cytoplasm. The enzyme catalyses Exonucleolytic cleavage in either 5'- to 3'- or 3'- to 5'-direction to yield nucleoside 5'-phosphates.. Bidirectionally degrades single-stranded DNA into large acid-insoluble oligonucleotides, which are then degraded further into small acid-soluble oligonucleotides. This Pelobacter propionicus (strain DSM 2379 / NBRC 103807 / OttBd1) protein is Exodeoxyribonuclease 7 small subunit.